Consider the following 364-residue polypeptide: Probable dual-specificity RNA methyltransferase RlmN (364 aa).

Glutamate 109 acts as the Proton acceptor in catalysis. One can recognise a Radical SAM core domain in the interval 123–351 (PKARLTVCVS…VSVRYSRGLE (229 aa)). Cysteines 130 and 356 form a disulfide. Residues cysteine 137, cysteine 141, and cysteine 144 each contribute to the [4Fe-4S] cluster site. Residues 184 to 185 (GE), serine 214, 237 to 239 (SLH), and asparagine 313 each bind S-adenosyl-L-methionine. Residue cysteine 356 is the S-methylcysteine intermediate of the active site.

The protein belongs to the radical SAM superfamily. RlmN family. Requires [4Fe-4S] cluster as cofactor.

Its subcellular location is the cytoplasm. The enzyme catalyses adenosine(2503) in 23S rRNA + 2 reduced [2Fe-2S]-[ferredoxin] + 2 S-adenosyl-L-methionine = 2-methyladenosine(2503) in 23S rRNA + 5'-deoxyadenosine + L-methionine + 2 oxidized [2Fe-2S]-[ferredoxin] + S-adenosyl-L-homocysteine. It carries out the reaction adenosine(37) in tRNA + 2 reduced [2Fe-2S]-[ferredoxin] + 2 S-adenosyl-L-methionine = 2-methyladenosine(37) in tRNA + 5'-deoxyadenosine + L-methionine + 2 oxidized [2Fe-2S]-[ferredoxin] + S-adenosyl-L-homocysteine. Functionally, specifically methylates position 2 of adenine 2503 in 23S rRNA and position 2 of adenine 37 in tRNAs. The sequence is that of Probable dual-specificity RNA methyltransferase RlmN from Nostoc punctiforme (strain ATCC 29133 / PCC 73102).